The chain runs to 82 residues: Large ribosomal subunit protein uL23 (82 aa).

The protein belongs to the universal ribosomal protein uL23 family. In terms of assembly, part of the 50S ribosomal subunit. Contacts protein L29.

Functionally, binds to 23S rRNA. One of the proteins that surrounds the polypeptide exit tunnel on the outside of the ribosome. This is Large ribosomal subunit protein uL23 from Sulfurisphaera tokodaii (strain DSM 16993 / JCM 10545 / NBRC 100140 / 7) (Sulfolobus tokodaii).